The following is a 388-amino-acid chain: Succinate--CoA ligase [ADP-forming] subunit beta (388 aa).

Positions 9–245 constitute an ATP-grasp domain; that stretch reads KALLKKYGVS…KSQENERELK (237 aa). Residues lysine 46, 53 to 55, glutamate 100, tyrosine 103, and glutamate 108 each bind ATP; that span reads GRG. 2 residues coordinate Mg(2+): asparagine 200 and aspartate 214. Residues asparagine 265 and 322–324 contribute to the substrate site; that span reads GIV.

This sequence belongs to the succinate/malate CoA ligase beta subunit family. Heterotetramer of two alpha and two beta subunits. Mg(2+) serves as cofactor.

It catalyses the reaction succinate + ATP + CoA = succinyl-CoA + ADP + phosphate. The enzyme catalyses GTP + succinate + CoA = succinyl-CoA + GDP + phosphate. The protein operates within carbohydrate metabolism; tricarboxylic acid cycle; succinate from succinyl-CoA (ligase route): step 1/1. In terms of biological role, succinyl-CoA synthetase functions in the citric acid cycle (TCA), coupling the hydrolysis of succinyl-CoA to the synthesis of either ATP or GTP and thus represents the only step of substrate-level phosphorylation in the TCA. The beta subunit provides nucleotide specificity of the enzyme and binds the substrate succinate, while the binding sites for coenzyme A and phosphate are found in the alpha subunit. The sequence is that of Succinate--CoA ligase [ADP-forming] subunit beta from Acinetobacter baylyi (strain ATCC 33305 / BD413 / ADP1).